We begin with the raw amino-acid sequence, 37 residues long: Mu-agatoxin-Aa1b (37 aa).

4 cysteine pairs are disulfide-bonded: Cys2–Cys18, Cys9–Cys23, Cys17–Cys33, and Cys25–Cys31. Position 37 is a serine amide (Ser37).

It belongs to the neurotoxin 07 (Beta/delta-agtx) family. 01 (aga-2) subfamily. Expressed by the venom gland.

The protein localises to the secreted. Functionally, insecticidal neurotoxin that induces an irreversible spastic paralysis when injected into insects. Modifies presynaptic voltage-gated sodium channels (Nav), causing them to open at the normal resting potential of the nerve. This leads to spontaneous release of neurotransmitter and repetitive action potentials in motor neurons. In Agelenopsis aperta (North American funnel-web spider), this protein is Mu-agatoxin-Aa1b.